The sequence spans 197 residues: MYEYIKGTYMGINKEYIVIENGDIGYKIHSSGYTIANMPNIGEHIMLYLTQIVREDFIGLYGFGSKEELELFNKLLTVNGIGAKASLSLLSITNVENLKRAIVLEDEKLLIKAPGIGKKTAQRIILELKDKLDVNLDEGIQTDSNDIKVSSKILEEAKEALMSLGYSEKECEKALKNVEEKESLEIIIKESLKFLMN.

The segment at 1–64 is domain I; the sequence is MYEYIKGTYM…EDFIGLYGFG (64 aa). A domain II region spans residues 65-143; the sequence is SKEELELFNK…VNLDEGIQTD (79 aa). Residues 144–149 form a flexible linker region; it reads SNDIKV. The interval 149–197 is domain III; sequence VSSKILEEAKEALMSLGYSEKECEKALKNVEEKESLEIIIKESLKFLMN.

This sequence belongs to the RuvA family. In terms of assembly, homotetramer. Forms an RuvA(8)-RuvB(12)-Holliday junction (HJ) complex. HJ DNA is sandwiched between 2 RuvA tetramers; dsDNA enters through RuvA and exits via RuvB. An RuvB hexamer assembles on each DNA strand where it exits the tetramer. Each RuvB hexamer is contacted by two RuvA subunits (via domain III) on 2 adjacent RuvB subunits; this complex drives branch migration. In the full resolvosome a probable DNA-RuvA(4)-RuvB(12)-RuvC(2) complex forms which resolves the HJ.

It localises to the cytoplasm. Functionally, the RuvA-RuvB-RuvC complex processes Holliday junction (HJ) DNA during genetic recombination and DNA repair, while the RuvA-RuvB complex plays an important role in the rescue of blocked DNA replication forks via replication fork reversal (RFR). RuvA specifically binds to HJ cruciform DNA, conferring on it an open structure. The RuvB hexamer acts as an ATP-dependent pump, pulling dsDNA into and through the RuvAB complex. HJ branch migration allows RuvC to scan DNA until it finds its consensus sequence, where it cleaves and resolves the cruciform DNA. The polypeptide is Holliday junction branch migration complex subunit RuvA (Hathewaya histolytica (Clostridium histolyticum)).